The sequence spans 117 residues: Fluoride-specific ion channel FluC 2 (117 aa).

The next 4 helical transmembrane spans lie at 4–24, 31–51, 59–79, and 94–114; these read FLIG…GDII, KFPW…GIIT, LSMI…TFMY, and LIYI…GEFI. Positions 69 and 72 each coordinate Na(+).

This sequence belongs to the fluoride channel Fluc/FEX (TC 1.A.43) family.

The protein resides in the cell membrane. The enzyme catalyses fluoride(in) = fluoride(out). Its activity is regulated as follows. Na(+) is not transported, but it plays an essential structural role and its presence is essential for fluoride channel function. Its function is as follows. Fluoride-specific ion channel. Important for reducing fluoride concentration in the cell, thus reducing its toxicity. In Clostridium acetobutylicum (strain ATCC 824 / DSM 792 / JCM 1419 / IAM 19013 / LMG 5710 / NBRC 13948 / NRRL B-527 / VKM B-1787 / 2291 / W), this protein is Fluoride-specific ion channel FluC 2.